Here is a 290-residue protein sequence, read N- to C-terminus: Pyridoxal kinase PdxY (290 aa).

Residues S12 and 47–48 (TQ) each bind substrate. ATP contacts are provided by residues D114, E151, K184, and 211 to 214 (RPLL). Substrate is bound at residue D225.

The protein belongs to the pyridoxine kinase family. PdxY subfamily. In terms of assembly, homodimer. It depends on Mg(2+) as a cofactor.

It catalyses the reaction pyridoxal + ATP = pyridoxal 5'-phosphate + ADP + H(+). It participates in cofactor metabolism; pyridoxal 5'-phosphate salvage; pyridoxal 5'-phosphate from pyridoxal: step 1/1. In terms of biological role, pyridoxal kinase involved in the salvage pathway of pyridoxal 5'-phosphate (PLP). Catalyzes the phosphorylation of pyridoxal to PLP. This is Pyridoxal kinase PdxY from Pseudomonas putida (strain GB-1).